A 190-amino-acid polypeptide reads, in one-letter code: Selenoprotein S (190 aa).

The helical transmembrane segment at 28–48 (SLLASYGWYILFSCVLLYIVI) threads the bilayer. The tract at residues 78–90 (RQEALAAARLRMQ) is VCP/p97-interacting motif (VIM). The tract at residues 96 to 190 (QVEKHKEKQR…RRGPSSGGUS (95 aa)) is disordered. The span at 97–118 (VEKHKEKQRQLEEEKRRQKIEM) shows a compositional bias: basic and acidic residues. Gly residues predominate over residues 160 to 174 (RGGGYNPLTGEGGGT). Position 189 (selenocysteine 189) is a non-standard amino acid, selenocysteine.

The protein belongs to the selenoprotein S family. As to quaternary structure, interacts with DERL1 and (via VIM motif) with VCP, suggesting that it forms a membrane complex with DERL1 that serves as a receptor for VCP. Also interacts with DERL2, DERL3 and SELENOK. The SELENOK-SELENOS complex interacts with VCP. Interacts with CCDC47. Truncated SELENOS proteins produced by failed UGA/Sec decoding are ubiquitinated by the CRL2(KLHDC2) and CRL2(KLHDC3) complexes, which recognizes the glycine (Gly) at the C-terminus of truncated SELENOS proteins. Truncated SELENOS proteins produced by failed UGA/Sec decoding are also ubiquitinated by the CRL5(KLHDC1) complex.

It is found in the endoplasmic reticulum membrane. The protein resides in the cytoplasm. Involved in the degradation process of misfolded endoplasmic reticulum (ER) luminal proteins. Participates in the transfer of misfolded proteins from the ER to the cytosol, where they are destroyed by the proteasome in a ubiquitin-dependent manner. Probably acts by serving as a linker between DERL1, which mediates the retrotranslocation of misfolded proteins into the cytosol, and the ATPase complex VCP, which mediates the translocation and ubiquitination. The sequence is that of Selenoprotein S from Rattus norvegicus (Rat).